The primary structure comprises 187 residues: dCTP deaminase, dUMP-forming (187 aa).

DCTP is bound by residues 99-104, Asp117, 125-127, Gln146, Tyr159, Lys166, and Gln170; these read KSSIAR and TLE. Glu127 serves as the catalytic Proton donor/acceptor.

The protein belongs to the dCTP deaminase family. As to quaternary structure, homotrimer.

It catalyses the reaction dCTP + 2 H2O = dUMP + NH4(+) + diphosphate. It participates in pyrimidine metabolism; dUMP biosynthesis; dUMP from dCTP: step 1/1. Functionally, bifunctional enzyme that catalyzes both the deamination of dCTP to dUTP and the hydrolysis of dUTP to dUMP without releasing the toxic dUTP intermediate. The polypeptide is dCTP deaminase, dUMP-forming (Methanoculleus marisnigri (strain ATCC 35101 / DSM 1498 / JR1)).